The sequence spans 232 residues: Large ribosomal subunit protein uL1 (232 aa).

This sequence belongs to the universal ribosomal protein uL1 family. In terms of assembly, part of the 50S ribosomal subunit.

Binds directly to 23S rRNA. The L1 stalk is quite mobile in the ribosome, and is involved in E site tRNA release. Functionally, protein L1 is also a translational repressor protein, it controls the translation of the L11 operon by binding to its mRNA. In Jannaschia sp. (strain CCS1), this protein is Large ribosomal subunit protein uL1.